We begin with the raw amino-acid sequence, 115 residues long: Large ribosomal subunit protein bL19 (115 aa).

Belongs to the bacterial ribosomal protein bL19 family.

Its function is as follows. This protein is located at the 30S-50S ribosomal subunit interface and may play a role in the structure and function of the aminoacyl-tRNA binding site. In Lawsonia intracellularis (strain PHE/MN1-00), this protein is Large ribosomal subunit protein bL19.